Reading from the N-terminus, the 450-residue chain is C4-dicarboxylate transport protein (450 aa).

8 helical membrane-spanning segments follow: residues 25–45, 56–76, 90–110, 162–182, 200–220, 234–254, 319–339, and 367–387; these read VVFAIIIGVLLGHFQPEYGAA, LIKMIIAPVIFLTIVTGIASM, MAYFLTFSTLALVVGLVVANV, ILQVLLVAVLFGVSLAMVGDA, LVNIVMKAAPIGAFGAMAFTI, LVLTFYITSAVFVLVVLGAVA, IYMTLAALFIAQATDTHLTLG, and AATLAVVPEVPVAGMALILGV.

Belongs to the dicarboxylate/amino acid:cation symporter (DAACS) (TC 2.A.23) family.

It is found in the cell inner membrane. Functionally, responsible for the transport of dicarboxylates such as succinate, fumarate, and malate from the periplasm across the membrane. The polypeptide is C4-dicarboxylate transport protein (Acidovorax sp. (strain JS42)).